Reading from the N-terminus, the 357-residue chain is 3-dehydroquinate synthase (357 aa).

NAD(+) contacts are provided by residues 126-127 (TT), lysine 139, and lysine 148. Residues glutamate 181, histidine 244, and histidine 261 each contribute to the Zn(2+) site.

This sequence belongs to the sugar phosphate cyclases superfamily. Dehydroquinate synthase family. Requires Co(2+) as cofactor. Zn(2+) is required as a cofactor. NAD(+) serves as cofactor.

It is found in the cytoplasm. It catalyses the reaction 7-phospho-2-dehydro-3-deoxy-D-arabino-heptonate = 3-dehydroquinate + phosphate. Its pathway is metabolic intermediate biosynthesis; chorismate biosynthesis; chorismate from D-erythrose 4-phosphate and phosphoenolpyruvate: step 2/7. Functionally, catalyzes the conversion of 3-deoxy-D-arabino-heptulosonate 7-phosphate (DAHP) to dehydroquinate (DHQ). The protein is 3-dehydroquinate synthase of Solibacter usitatus (strain Ellin6076).